A 2178-amino-acid polypeptide reads, in one-letter code: Toxin A (2178 aa).

The interval 1–93 (MLITREQLMK…RELIKNSRTS (93 aa)) is four-helical bundle. The GT44 domain maps to 98-474 (KNLSFIWIGG…KPEVNSTVFF (377 aa)). The tract at residues 98 to 474 (KNLSFIWIGG…KPEVNSTVFF (377 aa)) is glucosyltransferase region. The segment at 98–474 (KNLSFIWIGG…KPEVNSTVFF (377 aa)) is N-acetylglucosaminyltransferase region. Residues 103 to 105 (IWI), Asn-141, 267 to 271 (SDILR), and 284 to 286 (DLD) contribute to the UDP-N-acetyl-alpha-D-glucosamine site. Residues Asp-284, Asp-286, and Glu-520 each contribute to the Mg(2+) site. 523–525 (SSW) is a UDP-N-acetyl-alpha-D-glucosamine binding site. Residues 549-806 (NYEDGLNFNK…RVEQLNKVAE (258 aa)) are autoprocessing region. Residues Asn-557, Lys-607, and Lys-651 each contribute to the 1D-myo-inositol hexakisphosphate site. Residues 574-787 (VNSTKIYENY…QISNKYVVYW (214 aa)) enclose the Peptidase C80 domain. The active-site For protease activity is the His-657. The Nucleophile; for protease activity role is filled by Cys-707. Residues 758 to 759 (KR) and Lys-782 each bind 1D-myo-inositol hexakisphosphate. Residues 807-1485 (FAKDINSIIQ…VYMEGKIFLN (679 aa)) form a translocation region region. Cell wall-binding repeat units lie at residues 1799 to 1818 (EYGW…INLI), 1820 to 1839 (KKGY…NTGV), 1870 to 1889 (YTGW…NSKA), 1890 to 1909 (VTGL…NGQM), 1910 to 1929 (QIKW…NTGE), 1931 to 1950 (IIGW…EGRL), 1951 to 1970 (LTGY…NING), 2004 to 2023 (YKGW…DSIA), 2024 to 2043 (VTGS…KTAV), 2045 to 2060 (TNGW…YVSN), 2064 to 2083 (VLGY…STGI), 2114 to 2133 (YTGW…YNSA), 2134 to 2153 (VTGW…KTGA), and 2155 to 2174 (TTGL…KGEQ).

This sequence belongs to the clostridial glucosylating toxin (LCGT) family. Mn(2+) is required as a cofactor. The cofactor is Mg(2+). Post-translationally, undergoes autocatalytic cleavage to release the N-terminal part (N-acetylglucosaminyltransferase TcdA), which constitutes the active part of the toxin, in the host cytosol. 1D-myo-inositol hexakisphosphate-binding (InsP6) activates the peptidase C80 domain and promotes autoprocessing.

It localises to the secreted. It is found in the host endosome membrane. The protein resides in the host cytoplasm. Its subcellular location is the host cytosol. The protein localises to the host cell membrane. The catalysed reaction is L-threonyl-[protein] + UDP-N-acetyl-alpha-D-glucosamine = 3-O-(N-acetyl-alpha-D-glucosaminyl)-L-threonyl-[protein] + UDP + H(+). Protease activity is activated upon binding to 1D-myo-inositol hexakisphosphate (InsP6), which induces conformational reorganization. Its function is as follows. Precursor of a cytotoxin, which enters into host cells and mediates autoprocessing to release the active toxin (N-acetylglucosaminyltransferase TcdA) into the host cytosol. Once entered into host cells, acidification in the endosome promotes the membrane insertion of the translocation region and formation of a pore, leading to translocation of the GT44 and peptidase C80 domains across the endosomal membrane. This activates the peptidase C80 domain and autocatalytic processing, releasing the N-terminal part (N-acetylglucosaminyltransferase TcdA), which constitutes the active part of the toxin, in the cytosol. In terms of biological role, active form of the toxin, which is released into the host cytosol following autoprocessing and inactivates small GTPases. Acts by mediating monoglycosylation of small GTPases of the Rho family (Rac1, RhoA, RhoG and Cdc42) in host cells at the conserved threonine residue located in the switch I region ('Thr-37/35'), using UDP-N-acetyl-alpha-D-glucosamine as the sugar donor. Monoglycosylation of host small GTPases completely prevents the recognition of the downstream effector, blocking the GTPases in their inactive form, leading to actin cytoskeleton disruption and cell death. The sequence is that of Toxin A (tcdA) from Clostridium novyi.